We begin with the raw amino-acid sequence, 223 residues long: MOB kinase activator-like 4 (223 aa).

Residues 1-21 (MKMADGSTILRRNRPGTKSKD) are disordered. Cysteine 92, cysteine 97, histidine 169, and histidine 174 together coordinate Zn(2+).

It belongs to the MOB1/phocein family.

This chain is MOB kinase activator-like 4 (Mob4), found in Drosophila melanogaster (Fruit fly).